Consider the following 233-residue polypeptide: Orotidine 5'-phosphate decarboxylase (233 aa).

Residues D9, K31, 58 to 67 (DLKLHDIPNT), T120, R182, Q191, G211, and R212 contribute to the substrate site. K60 functions as the Proton donor in the catalytic mechanism.

It belongs to the OMP decarboxylase family. Type 1 subfamily. As to quaternary structure, homodimer.

The catalysed reaction is orotidine 5'-phosphate + H(+) = UMP + CO2. The protein operates within pyrimidine metabolism; UMP biosynthesis via de novo pathway; UMP from orotate: step 2/2. Functionally, catalyzes the decarboxylation of orotidine 5'-monophosphate (OMP) to uridine 5'-monophosphate (UMP). This Listeria monocytogenes serotype 4a (strain HCC23) protein is Orotidine 5'-phosphate decarboxylase.